The primary structure comprises 438 residues: Proline--tRNA ligase (438 aa).

It belongs to the class-II aminoacyl-tRNA synthetase family. ProS type 2 subfamily. In terms of assembly, homodimer.

It localises to the cytoplasm. The catalysed reaction is tRNA(Pro) + L-proline + ATP = L-prolyl-tRNA(Pro) + AMP + diphosphate. In terms of biological role, catalyzes the attachment of proline to tRNA(Pro) in a two-step reaction: proline is first activated by ATP to form Pro-AMP and then transferred to the acceptor end of tRNA(Pro). The polypeptide is Proline--tRNA ligase (Gluconobacter oxydans (strain 621H) (Gluconobacter suboxydans)).